A 361-amino-acid chain; its full sequence is Diacylglycerol O-acyltransferase 2 (361 aa).

The Cytoplasmic portion of the chain corresponds to 1 to 42 (MKTIIAAYSGVLRGTGSSLLSAVHDLPSIPWLSKSSVVRHLQ). Residues 43 to 61 (IISVLQWVLSFLILGVACT) form a helical membrane-spanning segment. The Lumenal segment spans residues 62-65 (AVLV). The chain crosses the membrane as a helical span at residues 66-85 (YIFCTDLWLIAALYFTWMVL). Over 86 to 361 (DWNTPYKGGR…LPDSETLEFI (276 aa)) the chain is Cytoplasmic.

This sequence belongs to the diacylglycerol acyltransferase family.

Its subcellular location is the endoplasmic reticulum membrane. The protein localises to the lipid droplet. It is found in the cytoplasm. It localises to the perinuclear region. The enzyme catalyses an acyl-CoA + a 1,2-diacyl-sn-glycerol = a triacyl-sn-glycerol + CoA. It catalyses the reaction all-trans-retinol + an acyl-CoA = an all-trans-retinyl ester + CoA. The catalysed reaction is 2-(9Z-octadecenoyl)-glycerol + (9Z)-octadecenoyl-CoA = 1,2-di-(9Z-octadecenoyl)-sn-glycerol + CoA. It carries out the reaction 1,2-di-(9Z-octadecenoyl)-sn-glycerol + (9Z)-octadecenoyl-CoA = 1,2,3-tri-(9Z-octadecenoyl)-glycerol + CoA. The enzyme catalyses all-trans-retinol + hexadecanoyl-CoA = all-trans-retinyl hexadecanoate + CoA. It catalyses the reaction 1-O-(9Z-octadecenyl)-glycerol + (9Z)-octadecenoyl-CoA = 1-O-(9Z-octadecyl)-3-(9Z-octadecenoyl)-glycerol + CoA. The catalysed reaction is 1-(9Z-octadecenoyl)-glycerol + (9Z)-octadecenoyl-CoA = 1,2-di-(9Z-octadecenoyl)-glycerol + CoA. It carries out the reaction 1,2-di-(9Z-octadecenoyl)-sn-glycerol + hexadecanoyl-CoA = 1,2-di-(9Z)-octadecenoyl-3-hexadecanoyl-sn-glycerol + CoA. The enzyme catalyses 1,3-di-(9Z-octadecenoyl)-glycerol + (9Z)-octadecenoyl-CoA = 1,2,3-tri-(9Z-octadecenoyl)-glycerol + CoA. It catalyses the reaction 2,3-di-(9Z)-octadecenoyl-sn-glycerol + (9Z)-octadecenoyl-CoA = 1,2,3-tri-(9Z-octadecenoyl)-glycerol + CoA. The catalysed reaction is 2-(9Z-octadecenoyl)-glycerol + hexadecanoyl-CoA = 1-hexadecanoyl-2-(9Z-octadecenoyl)-sn-glycerol + CoA. The protein operates within glycerolipid metabolism; triacylglycerol biosynthesis. Essential acyltransferase that catalyzes the terminal and only committed step in triacylglycerol synthesis by using diacylglycerol and fatty acyl CoA as substrates. Required for synthesis and storage of intracellular triglycerides. Probably plays a central role in cytosolic lipid accumulation. This Xenopus laevis (African clawed frog) protein is Diacylglycerol O-acyltransferase 2 (dgat2).